Reading from the N-terminus, the 508-residue chain is Photosystem II CP47 reaction center protein (508 aa).

The next 6 helical transmembrane spans lie at 21–36, 101–115, 140–156, 203–218, 237–252, and 457–472; these read SVHIMHTALVAGWAGS, IVFSGLCFLAAIWHW, GIHLFLSGVACFGFGAF, IAAGTLGILAGLFHLS, VLSSSIAAVFFAAFVV, and SFALLFFFGHIWHGAR.

It belongs to the PsbB/PsbC family. PsbB subfamily. As to quaternary structure, PSII is composed of 1 copy each of membrane proteins PsbA, PsbB, PsbC, PsbD, PsbE, PsbF, PsbH, PsbI, PsbJ, PsbK, PsbL, PsbM, PsbT, PsbX, PsbY, PsbZ, Psb30/Ycf12, at least 3 peripheral proteins of the oxygen-evolving complex and a large number of cofactors. It forms dimeric complexes. Requires Binds multiple chlorophylls. PSII binds additional chlorophylls, carotenoids and specific lipids. as cofactor.

Its subcellular location is the plastid. It is found in the chloroplast thylakoid membrane. Its function is as follows. One of the components of the core complex of photosystem II (PSII). It binds chlorophyll and helps catalyze the primary light-induced photochemical processes of PSII. PSII is a light-driven water:plastoquinone oxidoreductase, using light energy to abstract electrons from H(2)O, generating O(2) and a proton gradient subsequently used for ATP formation. The polypeptide is Photosystem II CP47 reaction center protein (Olimarabidopsis pumila (Dwarf rocket)).